The chain runs to 825 residues: Probable inorganic carbon transporter subunit DabA (825 aa).

Zn(2+) contacts are provided by cysteine 346, aspartate 348, histidine 516, and cysteine 531.

Belongs to the inorganic carbon transporter (TC 9.A.2) DabA family. Forms a complex with DabB. The cofactor is Zn(2+).

It localises to the cell inner membrane. Its function is as follows. Part of an energy-coupled inorganic carbon pump. This chain is Probable inorganic carbon transporter subunit DabA, found in Paracidovorax citrulli (strain AAC00-1) (Acidovorax citrulli).